We begin with the raw amino-acid sequence, 166 residues long: MVGSGISALGLLLLMQGSVDANGIQGFFYPWSCEGDVWDRESCGGQAAIENPNLCLRLRCCYRDGVCYHQRPDENMRRKHMWALGWTCGSLLFLITSICLFWWARRQDMLHLPRFLHRKCSKLSKTVSSLSKDRRSANKSTTVLQSPGGEVETAAAVSGEDTGGEE.

Residues 1-21 form the signal peptide; that stretch reads MVGSGISALGLLLLMQGSVDA. The Extracellular portion of the chain corresponds to 22–81; that stretch reads NGIQGFFYPWSCEGDVWDRESCGGQAAIENPNLCLRLRCCYRDGVCYHQRPDENMRRKHM. Positions 31–71 constitute a P-type domain; it reads WSCEGDVWDRESCGGQAAIENPNLCLRLRCCYRDGVCYHQR. Intrachain disulfides connect cysteine 33-cysteine 61, cysteine 43-cysteine 60, and cysteine 55-cysteine 67. A helical transmembrane segment spans residues 82 to 102; that stretch reads WALGWTCGSLLFLITSICLFW. Residues 103-166 lie on the Cytoplasmic side of the membrane; that stretch reads WARRQDMLHL…VSGEDTGGEE (64 aa). The segment at 130 to 166 is disordered; sequence LSKDRRSANKSTTVLQSPGGEVETAAAVSGEDTGGEE.

As to expression, detected in testis and in a mixture of spermatogenic cells at various stages (testicular germ cells). Not detected in heart, brain, spleen, lung, liver, skeletal muscle and kidney.

Its subcellular location is the membrane. The protein is Transmembrane protein 190 (Tmem190) of Mus musculus (Mouse).